Reading from the N-terminus, the 208-residue chain is Ribonuclease HII (208 aa).

Positions 5–198 (PLIAGVDEVG…CQPRLEHDCR (194 aa)) constitute an RNase H type-2 domain. Residues Asp11, Glu12, and Asp106 each coordinate a divalent metal cation.

The protein belongs to the RNase HII family. Mn(2+) serves as cofactor. The cofactor is Mg(2+).

The protein localises to the cytoplasm. The catalysed reaction is Endonucleolytic cleavage to 5'-phosphomonoester.. Endonuclease that specifically degrades the RNA of RNA-DNA hybrids. The sequence is that of Ribonuclease HII from Microcystis aeruginosa (strain NIES-843 / IAM M-2473).